We begin with the raw amino-acid sequence, 225 residues long: Orotate phosphoribosyltransferase (225 aa).

Position 31 (lysine 31) interacts with 5-phospho-alpha-D-ribose 1-diphosphate. 39–40 (FF) is an orotate binding site. 5-phospho-alpha-D-ribose 1-diphosphate is bound by residues 78-79 (YK), arginine 105, lysine 106, lysine 109, histidine 111, and 130-138 (DDVLTSGKA). Residues threonine 134 and arginine 163 each coordinate orotate.

It belongs to the purine/pyrimidine phosphoribosyltransferase family. PyrE subfamily. As to quaternary structure, homodimer.

The catalysed reaction is orotidine 5'-phosphate + diphosphate = orotate + 5-phospho-alpha-D-ribose 1-diphosphate. It participates in pyrimidine metabolism; UMP biosynthesis via de novo pathway; UMP from orotate: step 1/2. Catalyzes the transfer of a ribosyl phosphate group from 5-phosphoribose 1-diphosphate to orotate, leading to the formation of orotidine monophosphate (OMP). This Cryptococcus neoformans var. grubii serotype A (strain H99 / ATCC 208821 / CBS 10515 / FGSC 9487) (Filobasidiella neoformans var. grubii) protein is Orotate phosphoribosyltransferase (URA5).